Consider the following 318-residue polypeptide: Ankyrin repeat domain-containing protein 1 (318 aa).

Positions 37 to 77 (ALEKQEDLKTTSKSLIELEEEKQIKEKQLKSELLKKKLEER) form a coiled coil. ANK repeat units lie at residues 118-147 (VDQTTFFKAALDNKMPVIEKYLADGGDPNT), 151-180 (YKRTALHRACSEGHTDMVEKLIEAGANIEF), 184-213 (LESTALHWTCRGGSVETLKLLLNKGAAINA), 217-246 (LLSTPLHVAVRTGHYECAEHLIACEADLHA), 250-279 (EGDTPMHDGVRLNRYKMMRLLILYGVDLNI), and 283-314 (AGKTPMELVMQWQNGAKEIFNGLQSKSYKNSH).

It localises to the nucleus. In terms of biological role, may act as a nuclear transcription factor that negatively regulates the expression of cardiac genes. The polypeptide is Ankyrin repeat domain-containing protein 1 (ankrd1) (Xenopus tropicalis (Western clawed frog)).